The following is a 246-amino-acid chain: UDP-2,3-diacylglucosamine hydrolase (246 aa).

Aspartate 8, histidine 10, aspartate 41, asparagine 79, and histidine 114 together coordinate Mn(2+). 79 to 80 serves as a coordination point for substrate; that stretch reads NR. Aspartate 122, lysine 164, lysine 167, and histidine 195 together coordinate substrate. Histidine 195 and histidine 197 together coordinate Mn(2+).

It belongs to the LpxH family. Mn(2+) is required as a cofactor.

Its subcellular location is the cell inner membrane. The catalysed reaction is UDP-2-N,3-O-bis[(3R)-3-hydroxytetradecanoyl]-alpha-D-glucosamine + H2O = 2-N,3-O-bis[(3R)-3-hydroxytetradecanoyl]-alpha-D-glucosaminyl 1-phosphate + UMP + 2 H(+). It participates in glycolipid biosynthesis; lipid IV(A) biosynthesis; lipid IV(A) from (3R)-3-hydroxytetradecanoyl-[acyl-carrier-protein] and UDP-N-acetyl-alpha-D-glucosamine: step 4/6. In terms of biological role, hydrolyzes the pyrophosphate bond of UDP-2,3-diacylglucosamine to yield 2,3-diacylglucosamine 1-phosphate (lipid X) and UMP by catalyzing the attack of water at the alpha-P atom. Involved in the biosynthesis of lipid A, a phosphorylated glycolipid that anchors the lipopolysaccharide to the outer membrane of the cell. The sequence is that of UDP-2,3-diacylglucosamine hydrolase from Vibrio cholerae serotype O1 (strain ATCC 39541 / Classical Ogawa 395 / O395).